The chain runs to 373 residues: Cobalt-precorrin-5B C(1)-methyltransferase (373 aa).

It belongs to the CbiD family.

It catalyses the reaction Co-precorrin-5B + S-adenosyl-L-methionine = Co-precorrin-6A + S-adenosyl-L-homocysteine. The protein operates within cofactor biosynthesis; adenosylcobalamin biosynthesis; cob(II)yrinate a,c-diamide from sirohydrochlorin (anaerobic route): step 6/10. Functionally, catalyzes the methylation of C-1 in cobalt-precorrin-5B to form cobalt-precorrin-6A. This chain is Cobalt-precorrin-5B C(1)-methyltransferase, found in Listeria monocytogenes serovar 1/2a (strain ATCC BAA-679 / EGD-e).